The sequence spans 122 residues: Small ribosomal subunit protein uS10y (122 aa).

It belongs to the universal ribosomal protein uS10 family.

The protein is Small ribosomal subunit protein uS10y (RPS20B) of Arabidopsis thaliana (Mouse-ear cress).